A 434-amino-acid polypeptide reads, in one-letter code: RNA polymerase II holoenzyme cyclin-like subunit (434 aa).

The Cyclin N-terminal domain occupies 23–155; sequence EARRRVLLLE…LIEEMDSYLL (133 aa). Low complexity predominate over residues 248–278; sequence GSSTNPININNNNNTNTSNNNGTTSTTTTTT. Disordered stretches follow at residues 248-292, 301-320, and 330-362; these read GSST…DNTE, LTKSSNNSQDKSDDKMDIDN, and QIQNQTQHQHQESTHNNTSSTNTGRNGINGQIS. Positions 330–359 are enriched in low complexity; that stretch reads QIQNQTQHQHQESTHNNTSSTNTGRNGING.

This sequence belongs to the cyclin family. Cyclin C subfamily. In terms of assembly, component of the SRB8-11 complex, a regulatory module of the Mediator complex.

The protein localises to the nucleus. Component of the SRB8-11 complex. The SRB8-11 complex is a regulatory module of the Mediator complex which is itself involved in regulation of basal and activated RNA polymerase II-dependent transcription. The SRB8-11 complex may be involved in the transcriptional repression of a subset of genes regulated by Mediator. It may inhibit the association of the Mediator complex with RNA polymerase II to form the holoenzyme complex. The SRB8-11 complex phosphorylates the C-terminal domain (CTD) of the largest subunit of RNA polymerase II. This chain is RNA polymerase II holoenzyme cyclin-like subunit (SSN8), found in Candida albicans (strain SC5314 / ATCC MYA-2876) (Yeast).